Reading from the N-terminus, the 655-residue chain is Protein-glucosylgalactosylhydroxylysine glucosidase (655 aa).

258–259 (WD) lines the substrate pocket. The active-site Proton donor is glutamate 388. 456–457 (KQ) lines the substrate pocket.

This sequence belongs to the glycosyl hydrolase 65 family.

It catalyses the reaction (5R)-5-O-[alpha-D-glucosyl-(1-&gt;2)-beta-D-galactosyl]-5-hydroxy-L-lysyl-[collagen] + H2O = (5R)-5-O-(beta-D-galactosyl)-5-hydroxy-L-lysyl-[collagen] + D-glucose. Functionally, catalyzes the hydrolysis of glucose from the disaccharide unit linked to hydroxylysine residues of collagen and collagen-like proteins. The protein is Protein-glucosylgalactosylhydroxylysine glucosidase of Danio rerio (Zebrafish).